The chain runs to 364 residues: MEPVPEEARGVGDDEGELDCLTHMIGALLLQKEPENPENGDSKETIWSGELEWEDAQILDQPKTLHTVQCKICSMVKEGQPEINTENWPNKLKTQLIPKKVLGKIGEQFLKDARMVVFRSSQGEVLNLLITAMSSGFAGCIHFPSNPNCNIKALILIYSRDHQALVGFIPNNEDSFSERLQEILQGAKRKPGVKTPKQPQPEEPPPVEEDAIINELLWTGSLNWSTQASLEEPSISHKLECSVYIAIKNGDPGISAEDWPTDMPMVLMPSIYLGQFAGAFIKDSKLIILRSTPGEEHDSLASSMSAGSCGCARFSSEVVCKVIMLLYSSPRNAFLGFIPRDQANFVKRLREVLDEHRQKARNKE.

A disordered region spans residues 187–207 (AKRKPGVKTPKQPQPEEPPPV).

This sequence belongs to the Mediator complex subunit 25 family. PTOV1 subfamily.

In Drosophila melanogaster (Fruit fly), this protein is Protein PTOV1 homolog.